A 430-amino-acid polypeptide reads, in one-letter code: Tektin-2 (430 aa).

2 coiled-coil regions span residues 81-162 and 265-379; these read CLTD…FEKL and FRKR…DIAC.

This sequence belongs to the tektin family. Microtubule inner protein component of sperm flagellar doublet microtubules. May interact with CCDC172. In terms of processing, tyrosine phosphorylated. Post-translationally, ubiquitinated, leading to its degradation. Deubiquitinated by USP16, promoting its stability. Expressed in trachea multiciliated cells.

It is found in the cytoplasm. Its subcellular location is the cytoskeleton. It localises to the cilium axoneme. The protein resides in the flagellum axoneme. The protein localises to the microtubule organizing center. Its function is as follows. Microtubule inner protein (MIP) part of the dynein-decorated doublet microtubules (DMTs) in cilia and flagellar axoneme. Plays a key role in the assembly or attachment of the inner dynein arm to microtubules in sperm flagella and tracheal cilia. Forms filamentous polymers in the walls of ciliary and flagellar microtubules. The protein is Tektin-2 (TEKT2) of Bos taurus (Bovine).